The primary structure comprises 580 residues: E3 ubiquitin-protein ligase TRIM45 (580 aa).

The RING-type zinc finger occupies 29-98 (CPLCMGLFKA…QIGILCPVCD (70 aa)). B box-type zinc fingers lie at residues 130-176 (GQGL…MVDL) and 186-227 (GKPI…CDFT). Zn(2+) is bound by residues C135, C138, C158, H162, C191, H194, C214, and H219. Residues 281-335 (SEGYIKAIEEHRDKLLKQLEDIRVQKENSLQLQKAQLEQLLADMRTGVEFTEHLL) are a coiled coil. Residues 394 to 497 (TKEVDPAKCV…VQGSPFTVTV (104 aa)) form a Filamin repeat.

This sequence belongs to the TRIM/RBCC family.

The protein localises to the cytoplasm. It localises to the nucleus. The enzyme catalyses S-ubiquitinyl-[E2 ubiquitin-conjugating enzyme]-L-cysteine + [acceptor protein]-L-lysine = [E2 ubiquitin-conjugating enzyme]-L-cysteine + N(6)-ubiquitinyl-[acceptor protein]-L-lysine.. Functionally, E3 ubiquitin-protein ligase that plays a role in the regulation of inflammatory response. Mechanistically, mediates the 'Lys-48'-linked polyubiquitination of TAB2, a regulatory protein of the kinase TAK1, leading to its degradation via the proteasomal pathway and inhibition of the TLR-mediated inflammatory immune response. May act as a transcriptional repressor in mitogen-activated protein kinase signaling pathway. The protein is E3 ubiquitin-protein ligase TRIM45 (TRIM45) of Bos taurus (Bovine).